Here is a 394-residue protein sequence, read N- to C-terminus: Putative serine protease HhoA (394 aa).

The signal sequence occupies residues 1-24 (MKYPTWLRRIGGYLLAFAVGTAFG). Positions 293–377 (MMNITVDQAQ…ALKLDLLRGD (85 aa)) constitute a PDZ domain.

The protein belongs to the peptidase S1C family.

It is found in the periplasm. A putative protease, its function overlaps that of the related putative proteases HhoB and HtrA. This Synechocystis sp. (strain ATCC 27184 / PCC 6803 / Kazusa) protein is Putative serine protease HhoA (hhoA).